Consider the following 283-residue polypeptide: Circadian clock oscillator protein KaiA (283 aa).

The tract at residues 3–133 (QSTALTICGL…VKLCPGCAVP (131 aa)) is psR domain, binds oxidized quinones. The region spanning 3–163 (QSTALTICGL…RLSQKLKERL (161 aa)) is the KaiA N-terminal domain. A flexible linker region spans residues 164–172 (GYLGVYYKR). The KaiA C-terminal domain maps to 173–281 (DTAFFFRRMS…CEMYRRSIPR (109 aa)).

Homodimer. The KaiABC complex composition changes during the circadian cycle to control KaiC phosphorylation. Complexes KaiC(6), KaiA(2-4):KaiC(6), KaiB(6):KaiC(6) and KaiC(6):KaiB(6):KaiA(12) are among the most important forms, many form cooperatively. KaiA and CikA bind to the same region of the KaiB(fs) form and therefore compete.

Key component of the KaiABC oscillator complex, which constitutes the main circadian regulator in cyanobacteria. Complex composition changes during the circadian cycle to control KaiC phosphorylation. KaiA stimulates KaiC autophosphorylation, while KaiB sequesters KaiA, leading to KaiC autodephosphorylation. KaiA binding to the KaiC CII domain during the subjective day yields KaiA(2-4):KaiC(6) complexes which stimulate KaiC autophosphorylation. Phospho-Ser-431 KaiC accumulation triggers binding of KaiB during the subjective night to form the KaiB(6):KaiC(6) complex, leading to changes in the output regulators CikA and SasA. KaiB(6):KaiC(6) formation exposes a site for KaiA binding on KaiB that sequesters KaiA from KaiC's CII domain, making the KaiC(6):KaiB(6):KaiA(12) complex resulting in KaiC autodephosphorylation. Complete dephosphorylation of KaiC leads to dissociation of KaiA(2):KaiB(1), completing 1 cycle of the Kai oscillator. Its function is as follows. Binds oxidized quinones via the N-terminal PsR domain, allowing it to sense redox changes and possibly mediate clock input. The sequence is that of Circadian clock oscillator protein KaiA from Thermostichus vulcanus (Synechococcus vulcanus).